We begin with the raw amino-acid sequence, 451 residues long: Phosphoglucosamine mutase (451 aa).

Ser-102 functions as the Phosphoserine intermediate in the catalytic mechanism. Residues Ser-102, Asp-242, Asp-244, and Asp-246 each contribute to the Mg(2+) site. Phosphoserine is present on Ser-102.

It belongs to the phosphohexose mutase family. Mg(2+) is required as a cofactor. Activated by phosphorylation.

The catalysed reaction is alpha-D-glucosamine 1-phosphate = D-glucosamine 6-phosphate. Catalyzes the conversion of glucosamine-6-phosphate to glucosamine-1-phosphate. The polypeptide is Phosphoglucosamine mutase (Staphylococcus aureus (strain bovine RF122 / ET3-1)).